A 1096-amino-acid polypeptide reads, in one-letter code: Serine/threonine-protein kinase mig-15 (1096 aa).

Residues 21–288 (FELIEVVGNG…TGALLRHPFI (268 aa)) enclose the Protein kinase domain. ATP is bound by residues 27-35 (VGNGTYGQV) and Lys50. Residue Asp151 is the Proton acceptor of the active site. Residues 293–315 (HEQTIRHSIKEHIDRNRRVKKDD) show a composition bias toward basic and acidic residues. 4 disordered regions span residues 293 to 351 (HEQT…MIPM), 380 to 492 (LPQQ…QQSR), 517 to 545 (KMGG…EASI), and 574 to 664 (NGEG…DLLP). Residues 316 to 328 (ADYEYSGSEDDEP) are compositionally biased toward acidic residues. Positions 380–393 (LPQQPAPAPFQYQQ) are enriched in low complexity. Composition is skewed to basic and acidic residues over residues 397-408 (VEPRRESSEVKL) and 453-472 (NYEK…ERQA). The span at 532-541 (SPPPPAPPPR) shows a compositional bias: pro residues. Residues 629–642 (LDDDDSDSDNEEGN) are compositionally biased toward acidic residues. Residues 778 to 1070 (SGEILCAALW…KFLCERNDKV (293 aa)) enclose the CNH domain.

It belongs to the protein kinase superfamily. STE Ser/Thr protein kinase family. STE20 subfamily.

The enzyme catalyses L-seryl-[protein] + ATP = O-phospho-L-seryl-[protein] + ADP + H(+). The catalysed reaction is L-threonyl-[protein] + ATP = O-phospho-L-threonyl-[protein] + ADP + H(+). Involved in cell migration and signal transduction. Important in several developmental processes including epidermal development, Q neuroblast migrations and muscle arm targeting. Required with ina-1/pat-3 to stabilize the commissural axons growth cone along a precise direction and are required for the cell to respond appropriately when signaling in the growth cone must change. During gonad morphogenesis, involved in distal tip cell (DTC) migration from the dorsal side of the hermaphrodite body to the midbody to allow for formation of gonad arms. The polypeptide is Serine/threonine-protein kinase mig-15 (mig-15) (Caenorhabditis elegans).